The following is a 386-amino-acid chain: 2-deoxy-scyllo-inosose synthase (386 aa).

Residues Asp-42, 73–76 (EEHK), 105–109 (GVTGN), 129–130 (TT), 140–142 (SLK), and 151–152 (KN) each bind NAD(+). The active site involves Lys-142. Glu-184 contributes to the Co(2+) binding site. Residue Glu-244 is part of the active site. Residues His-247 and His-263 each coordinate Co(2+).

This sequence belongs to the sugar phosphate cyclases superfamily. DOI synthase family. Requires NAD(+) as cofactor. Co(2+) is required as a cofactor.

The enzyme catalyses D-glucose 6-phosphate = 2-deoxy-L-scyllo-inosose + phosphate. It functions in the pathway metabolic intermediate biosynthesis; 2-deoxystreptamine biosynthesis; 2-deoxystreptamine from D-glucose 6-phosphate: step 1/4. The protein operates within antibiotic biosynthesis; tobramycin biosynthesis. Functionally, catalyzes the intramolecular carbocycle formation from D-glucose-6-phosphate to 2-deoxy-scyllo-inosose (DOI). The chain is 2-deoxy-scyllo-inosose synthase (tbmA) from Streptoalloteichus tenebrarius (strain ATCC 17920 / DSM 40477 / JCM 4838 / CBS 697.72 / NBRC 16177 / NCIMB 11028 / NRRL B-12390 / A12253. 1 / ISP 5477) (Streptomyces tenebrarius).